Consider the following 530-residue polypeptide: Nectin-2 (530 aa).

The first 31 residues, 1-31, serve as a signal peptide directing secretion; that stretch reads MARAAVLPPSRLSPTLPLLPLLLLLLQETGA. The 116-residue stretch at 32–147 folds into the Ig-like V-type domain; it reads QDVRVRVLPE…NGTRRGVTWL (116 aa). The Extracellular segment spans residues 32 to 351; that stretch reads QDVRVRVLPE…STAGAGATGG (320 aa). Cys54 and Cys131 are disulfide-bonded. 2 N-linked (GlcNAc...) asparagine glycosylation sites follow: Asn128 and Asn138. 2 consecutive Ig-like C2-type domains span residues 153–247 and 252–337; these read PENH…VTLS and PEVS…VILV. 2 disulfide bridges follow: Cys174–Cys229 and Cys274–Cys320. Asn315 carries N-linked (GlcNAc...) asparagine glycosylation. The helical transmembrane segment at 352 to 372 threads the bilayer; that stretch reads IIGGIIAAIIATAVAGTGILI. The Cytoplasmic portion of the chain corresponds to 373 to 530; the sequence is CRQQRKEQRL…DFFVSRAMYV (158 aa). Residues 382–407 are disordered; that stretch reads LQAADEEEELEGPPSYKPPTPKAKLE. Thr401 is modified (phosphothreonine). Position 424 is a phosphoserine (Ser424).

It belongs to the nectin family. As to quaternary structure, can form trans-heterodimers with NECTIN3. Interacts with CD226 or with PVRIG; these interactions are competitive and have a differential functional outcome on T-cell activation, either positive or negative, respectively. Binds with low affinity to TIGIT. As to expression, brain, spinal cord, spleen, kidney, heart and liver.

It localises to the cell membrane. Functionally, modulator of T-cell signaling. Can be either a costimulator of T-cell function, or a coinhibitor, depending on the receptor it binds to. Upon binding to CD226, stimulates T-cell proliferation and cytokine production, including that of IL2, IL5, IL10, IL13, and IFNG. Upon interaction with PVRIG, inhibits T-cell proliferation. These interactions are competitive. Probable cell adhesion protein. This Mus musculus (Mouse) protein is Nectin-2.